The sequence spans 371 residues: tRNA-specific 2-thiouridylase MnmA (371 aa).

ATP-binding positions include 14–21 (GMSGGVDS) and Met40. The interval 100 to 102 (NPD) is interaction with target base in tRNA. Cys105 functions as the Nucleophile in the catalytic mechanism. Cys105 and Cys205 are joined by a disulfide. Gly129 contacts ATP. An interaction with tRNA region spans residues 155-157 (KDQ). The active-site Cysteine persulfide intermediate is the Cys205. Positions 321–322 (RY) are interaction with tRNA.

It belongs to the MnmA/TRMU family.

The protein localises to the cytoplasm. It catalyses the reaction S-sulfanyl-L-cysteinyl-[protein] + uridine(34) in tRNA + AH2 + ATP = 2-thiouridine(34) in tRNA + L-cysteinyl-[protein] + A + AMP + diphosphate + H(+). Its function is as follows. Catalyzes the 2-thiolation of uridine at the wobble position (U34) of tRNA, leading to the formation of s(2)U34. The polypeptide is tRNA-specific 2-thiouridylase MnmA (Bordetella pertussis (strain Tohama I / ATCC BAA-589 / NCTC 13251)).